We begin with the raw amino-acid sequence, 274 residues long: Lipoprotein E (274 aa).

The first 20 residues, 1-20, serve as a signal peptide directing secretion; the sequence is MKTTLKMTALAALSAFVLAG. Residue Cys-21 is the site of N-palmitoyl cysteine attachment. A lipid anchor (S-diacylglycerol cysteine) is attached at Cys-21.

It is found in the cell outer membrane. The sequence is that of Lipoprotein E (hel) from Haemophilus influenzae (strain ATCC 51907 / DSM 11121 / KW20 / Rd).